Reading from the N-terminus, the 555-residue chain is Branched-chain-amino-acid aminotransferase-like protein 1 (555 aa).

The protein belongs to the class-IV pyridoxal-phosphate-dependent aminotransferase family.

This is Branched-chain-amino-acid aminotransferase-like protein 1 from Arabidopsis thaliana (Mouse-ear cress).